A 274-amino-acid polypeptide reads, in one-letter code: Dermonecrotic toxin SdSicTox-betaIIB1aii (274 aa).

Histidine 5 is an active-site residue. Glutamate 25 and aspartate 27 together coordinate Mg(2+). Histidine 41 functions as the Nucleophile in the catalytic mechanism. Intrachain disulfides connect cysteine 45–cysteine 51 and cysteine 47–cysteine 190. Mg(2+) is bound at residue aspartate 85.

It belongs to the arthropod phospholipase D family. Class II subfamily. Mg(2+) is required as a cofactor. In terms of tissue distribution, expressed by the venom gland.

Its subcellular location is the secreted. The catalysed reaction is an N-(acyl)-sphingosylphosphocholine = an N-(acyl)-sphingosyl-1,3-cyclic phosphate + choline. The enzyme catalyses an N-(acyl)-sphingosylphosphoethanolamine = an N-(acyl)-sphingosyl-1,3-cyclic phosphate + ethanolamine. It catalyses the reaction a 1-acyl-sn-glycero-3-phosphocholine = a 1-acyl-sn-glycero-2,3-cyclic phosphate + choline. It carries out the reaction a 1-acyl-sn-glycero-3-phosphoethanolamine = a 1-acyl-sn-glycero-2,3-cyclic phosphate + ethanolamine. Functionally, dermonecrotic toxins cleave the phosphodiester linkage between the phosphate and headgroup of certain phospholipids (sphingolipid and lysolipid substrates), forming an alcohol (often choline) and a cyclic phosphate. This toxin acts on sphingomyelin (SM). It may also act on ceramide phosphoethanolamine (CPE), lysophosphatidylcholine (LPC) and lysophosphatidylethanolamine (LPE), but not on lysophosphatidylserine (LPS), and lysophosphatidylglycerol (LPG). It acts by transphosphatidylation, releasing exclusively cyclic phosphate products as second products. Induces dermonecrosis, hemolysis, increased vascular permeability, edema, inflammatory response, and platelet aggregation. This is Dermonecrotic toxin SdSicTox-betaIIB1aii from Sicarius cf. damarensis (strain GJB-2008) (Six-eyed sand spider).